A 298-amino-acid chain; its full sequence is ATP phosphoribosyltransferase (298 aa).

This sequence belongs to the ATP phosphoribosyltransferase family. Long subfamily. Mg(2+) is required as a cofactor.

The protein localises to the cytoplasm. The catalysed reaction is 1-(5-phospho-beta-D-ribosyl)-ATP + diphosphate = 5-phospho-alpha-D-ribose 1-diphosphate + ATP. It participates in amino-acid biosynthesis; L-histidine biosynthesis; L-histidine from 5-phospho-alpha-D-ribose 1-diphosphate: step 1/9. Its activity is regulated as follows. Feedback inhibited by histidine. Catalyzes the condensation of ATP and 5-phosphoribose 1-diphosphate to form N'-(5'-phosphoribosyl)-ATP (PR-ATP). Has a crucial role in the pathway because the rate of histidine biosynthesis seems to be controlled primarily by regulation of HisG enzymatic activity. The chain is ATP phosphoribosyltransferase from Aeromonas hydrophila subsp. hydrophila (strain ATCC 7966 / DSM 30187 / BCRC 13018 / CCUG 14551 / JCM 1027 / KCTC 2358 / NCIMB 9240 / NCTC 8049).